Here is a 133-residue protein sequence, read N- to C-terminus: DNA-directed RNA polymerase subunit omega (133 aa).

This sequence belongs to the RNA polymerase subunit omega family. In terms of assembly, the RNAP catalytic core consists of 2 alpha, 1 beta, 1 beta' and 1 omega subunit. When a sigma factor is associated with the core the holoenzyme is formed, which can initiate transcription.

It catalyses the reaction RNA(n) + a ribonucleoside 5'-triphosphate = RNA(n+1) + diphosphate. Its function is as follows. Promotes RNA polymerase assembly. Latches the N- and C-terminal regions of the beta' subunit thereby facilitating its interaction with the beta and alpha subunits. In Brucella abortus (strain S19), this protein is DNA-directed RNA polymerase subunit omega.